A 359-amino-acid chain; its full sequence is UPF0283 membrane protein Atu1356 (359 aa).

The interval 1 to 39 is disordered; the sequence is MKAPTQNDPQTRRPAAFTLETEEAARPSATQKRAPRSFD. The next 2 helical transmembrane spans lie at 75–95 and 108–128; these read FGKLGLGALGVLFSLAFGLWA and WLGYTATIALIVALFAVLALV.

This sequence belongs to the UPF0283 family.

The protein localises to the cell inner membrane. In Agrobacterium fabrum (strain C58 / ATCC 33970) (Agrobacterium tumefaciens (strain C58)), this protein is UPF0283 membrane protein Atu1356.